A 350-amino-acid polypeptide reads, in one-letter code: Phenylalanine--tRNA ligase alpha subunit (350 aa).

Glu-259 provides a ligand contact to Mg(2+).

Belongs to the class-II aminoacyl-tRNA synthetase family. Phe-tRNA synthetase alpha subunit type 1 subfamily. In terms of assembly, tetramer of two alpha and two beta subunits. Mg(2+) serves as cofactor.

The protein resides in the cytoplasm. The enzyme catalyses tRNA(Phe) + L-phenylalanine + ATP = L-phenylalanyl-tRNA(Phe) + AMP + diphosphate + H(+). In Rickettsia typhi (strain ATCC VR-144 / Wilmington), this protein is Phenylalanine--tRNA ligase alpha subunit.